The chain runs to 358 residues: DNA replication and repair protein RecF (358 aa).

Position 30–37 (30–37) interacts with ATP; the sequence is GANGSGKT.

It belongs to the RecF family.

Its subcellular location is the cytoplasm. Its function is as follows. The RecF protein is involved in DNA metabolism; it is required for DNA replication and normal SOS inducibility. RecF binds preferentially to single-stranded, linear DNA. It also seems to bind ATP. The chain is DNA replication and repair protein RecF from Edwardsiella ictaluri (strain 93-146).